The sequence spans 379 residues: V-type proton ATPase subunit S1 (379 aa).

A signal peptide spans 1-17; that stretch reads MLWKSLIALCVIGAAVA. The Lumenal segment spans residues 18–333; it reads EQTPVFLWGA…WDCVGFVTPG (316 aa). Residues asparagine 225 and asparagine 284 are each glycosylated (N-linked (GlcNAc...) asparagine). Cysteine 282 and cysteine 326 are oxidised to a cystine. The chain crosses the membrane as a helical span at residues 334–354; that stretch reads ILMGLFVVALLLVIMFVGVCW. The Cytoplasmic portion of the chain corresponds to 355–379; the sequence is MMDINTMDRFDDPKGKTITINAAAE.

This sequence belongs to the vacuolar ATPase subunit S1 family. In terms of assembly, accessory component of the multisubunit proton-transporting vacuolar (V)-ATPase protein pump. May interact with ATP6AP2.

Its subcellular location is the endoplasmic reticulum membrane. In terms of biological role, accessory subunit of the proton-transporting vacuolar (V)-ATPase protein pump, which is required for luminal acidification of secretory vesicles. This Drosophila melanogaster (Fruit fly) protein is V-type proton ATPase subunit S1.